The sequence spans 196 residues: Secreted effector protein SseB (196 aa).

This sequence belongs to the EspA/SseB family. As to quaternary structure, may form a complex with SseC and SseD. Binds to the chaperone SseA.

Its subcellular location is the secreted. It is found in the cell surface. Functionally, effector proteins function to alter host cell physiology and promote bacterial survival in host tissues. May act as a translocator that mediates translocation of SPI-2 T3SS effector proteins from intraphagosomal bacterial cells into the host cells. SseB is required for correct localization of SseC and SseD on the bacterial cell surface. The sequence is that of Secreted effector protein SseB (sseB) from Salmonella typhimurium (strain LT2 / SGSC1412 / ATCC 700720).